The chain runs to 457 residues: Transcription factor CP2-like protein 1 (457 aa).

Residues 1-52 (MLFWHTQPEHYNQHNSGSYLRDVLALPIFKQEEPQLSPENEARLPPLQYVLC) are mediate transcriptional repression. One can recognise a Grh/CP2 DB domain in the interval 43–280 (RLPPLQYVLC…PSPSYNGSPN (238 aa)). Disordered regions lie at residues 219–245 (KPKG…KEKY) and 271–301 (PSPS…LPVG). A compositionally biased stretch (basic and acidic residues) spans 221–245 (KGADRKQETDREKMEKRTAQEKEKY). Residues 261–365 (PDVAYQVNSA…IRLFNAIKGR (105 aa)) are SAM2-like domain. Over residues 271–281 (PSPSYNGSPNS) the composition is skewed to polar residues.

Belongs to the grh/CP2 family. CP2 subfamily. Forms homohexamers via its SAM-like domain. Interacts with MTA1; which is indispensable for TFCP2L1-mediated self-renewal-promoting effect and endoderm-inhibiting action.

The protein resides in the nucleus. Transcription factor that facilitates establishment and maintenance of pluripotency in embryonic stem cells (ESCs). With KLF2, acts as the major effector of self-renewal that mediates induction of pluripotency downstream of LIF/STAT3 and Wnt/beta-catenin signaling. Required for normal duct development in the salivary gland and kidney. Coordinates the development of the kidney collecting ducts intercalated (IC) and principal (PC) cells, which regulate acid-base and salt-water homeostasis, respectively. Regulates the expression of IC genes including subunits B1 and D2 of the V-ATPase complex, OXGR1, CA12, SLC4A1, AQP6 and IC-specific transcription factor FOXI1. Also regulates the expression of JAG1 and subsequent notch signaling in the collecting duct. JAG1 initiates notch signaling in PCs but inhibits notch signaling in ICs. Acts as a transcriptional suppressor that may suppress UBP1-mediated transcriptional activation. Modulates the placental expression of CYP11A1. The polypeptide is Transcription factor CP2-like protein 1 (TFCP2L1) (Pongo abelii (Sumatran orangutan)).